The sequence spans 257 residues: Transmembrane protein 101 (257 aa).

8 helical membrane passes run 21 to 40, 52 to 72, 77 to 97, 110 to 130, 139 to 159, 182 to 202, 206 to 226, and 233 to 253; these read VLLT…LYAE, VPYL…MSFG, WFAL…YVGG, YSRT…AGEL, SLQS…AYSL, LFFV…YVTL, ILAV…AYWH, and FWNQ…AVIL.

The protein localises to the membrane. Functionally, may activate NF-kappa-B signaling pathways. This chain is Transmembrane protein 101 (TMEM101), found in Bos taurus (Bovine).